The chain runs to 637 residues: Zinc-transporting ATPase (637 aa).

4 helical membrane-spanning segments follow: residues 43–63 (GWLLSGYQVLSIILFLLAFVI), 89–109 (IFAAIGSALIGYWAEGAILIF), 258–278 (GVLIAVALLLFVPHFALGWSW), and 286–306 (MVFMVVASPCALVASIMPAAL). Asp337 serves as the catalytic 4-aspartylphosphate intermediate. Mg(2+)-binding residues include Asp535 and Asp539. The helical transmembrane segment at 599–619 (VICLLICANFLQAMELPFGVI) threads the bilayer.

This sequence belongs to the cation transport ATPase (P-type) (TC 3.A.3) family. Type IB subfamily.

The protein localises to the cell membrane. The catalysed reaction is Zn(2+)(out) + ATP(in) + H2O(in) = Zn(2+)(in) + ADP(in) + phosphate(in) + H(+)(in). Couples the hydrolysis of ATP with the transport of zinc into the cell. Plays an important role in protecting cells against oxidative stress. ZosA-mediated zinc transport is required for post-transcriptional control of comK and competence development. The chain is Zinc-transporting ATPase (zosA) from Bacillus subtilis (strain 168).